The sequence spans 343 residues: N-acetyl-gamma-glutamyl-phosphate reductase (343 aa).

Residue Cys-149 is part of the active site.

It belongs to the NAGSA dehydrogenase family. Type 1 subfamily.

It is found in the cytoplasm. It catalyses the reaction N-acetyl-L-glutamate 5-semialdehyde + phosphate + NADP(+) = N-acetyl-L-glutamyl 5-phosphate + NADPH + H(+). It participates in amino-acid biosynthesis; L-arginine biosynthesis; N(2)-acetyl-L-ornithine from L-glutamate: step 3/4. Catalyzes the NADPH-dependent reduction of N-acetyl-5-glutamyl phosphate to yield N-acetyl-L-glutamate 5-semialdehyde. The chain is N-acetyl-gamma-glutamyl-phosphate reductase from Alkalilimnicola ehrlichii (strain ATCC BAA-1101 / DSM 17681 / MLHE-1).